The following is a 296-amino-acid chain: L-ornithine N(alpha)-acyltransferase (296 aa).

The protein belongs to the acetyltransferase family. OlsB subfamily.

The catalysed reaction is a (3R)-hydroxyacyl-[ACP] + L-ornithine = a lyso-ornithine lipid + holo-[ACP] + H(+). Its pathway is lipid metabolism. In terms of biological role, catalyzes the first step in the biosynthesis of ornithine lipids, which are phosphorus-free membrane lipids. Catalyzes the 3-hydroxyacyl-acyl carrier protein-dependent acylation of ornithine to form lyso-ornithine lipid (LOL). This chain is L-ornithine N(alpha)-acyltransferase, found in Rhizobium meliloti (strain 1021) (Ensifer meliloti).